The chain runs to 271 residues: (21S)-21-acetoxyl-apo-melianone synthase SDR (271 aa).

Ser150 (proton donor) is an active-site residue. Residue Tyr163 is the Proton acceptor of the active site. Lys167 acts as the Proton donor/acceptor in catalysis.

Belongs to the short-chain dehydrogenases/reductases (SDR) family. Mainly expressed in petioles.

It catalyses the reaction 21-O-acetyl-isomeliandiol + A = (21S)-21-acetoxyl-apo-melianone + AH2. It participates in secondary metabolite biosynthesis; terpenoid biosynthesis. Oxidoreductase involved in the biosynthesis of limonoids triterpene natural products such as azadirachtin, an antifeedant widely used as bioinsecticide, and possessing many medicinal applications including anti-tumoral, anti-malarial, anti-rheumatic, antibacterial, anti-inflammatory, anti-pyretic and diuretic effects. Catalyzes the oxidation of 21-O-acetyl-isomeliandiol to (21S)-21-acetoxyl-apo-melianone. The sequence is that of (21S)-21-acetoxyl-apo-melianone synthase SDR from Melia azedarach (Chinaberry tree).